The following is a 688-amino-acid chain: Elongation factor G (688 aa).

Residues glutamate 8 to cysteine 282 form the tr-type G domain. GTP contacts are provided by residues alanine 17–threonine 24, aspartate 81–histidine 85, and asparagine 135–aspartate 138.

Belongs to the TRAFAC class translation factor GTPase superfamily. Classic translation factor GTPase family. EF-G/EF-2 subfamily.

The protein localises to the cytoplasm. Catalyzes the GTP-dependent ribosomal translocation step during translation elongation. During this step, the ribosome changes from the pre-translocational (PRE) to the post-translocational (POST) state as the newly formed A-site-bound peptidyl-tRNA and P-site-bound deacylated tRNA move to the P and E sites, respectively. Catalyzes the coordinated movement of the two tRNA molecules, the mRNA and conformational changes in the ribosome. The polypeptide is Elongation factor G (Aster yellows witches'-broom phytoplasma (strain AYWB)).